The following is a 717-amino-acid chain: Probable inactive histone-lysine N-methyltransferase SUVR2 (717 aa).

Residues 61–73 (QAIQESEEKKADE) are compositionally biased toward basic and acidic residues. The segment at 61–136 (QAIQESEEKK…LGSPTLEGPS (76 aa)) is disordered. Over residues 120–130 (SALASPSLGSP) the composition is skewed to low complexity. Residues C445, C446, C449, C453, C462, C529, C533, C535, and C539 each coordinate Zn(2+). The Pre-SET domain maps to 458–547 (MACRCATAFN…NCGNRVVQQG (90 aa)). An SET domain is found at 550-679 (NKLQVFFTPN…AMEELTWDYG (130 aa)). Residues 561 to 563 (RGW) and 635 to 636 (NH) each bind S-adenosyl-L-methionine. C638 contacts Zn(2+). Y678 is an S-adenosyl-L-methionine binding site. Residues 690 to 706 (SPFHCQCGSDFCRVRKQ) form the Post-SET domain. Zn(2+) contacts are provided by C694, C696, and C701.

It belongs to the class V-like SAM-binding methyltransferase superfamily. Histone-lysine methyltransferase family. In terms of assembly, interacts with SUVR1, CHR19, CHR28 and itself. Interacts with CHR27.

Its subcellular location is the nucleus. The protein localises to the chromosome. In terms of biological role, probable inactive histone-lysine methyltransferase that acts as regulator of transctiptional gene silencing independently of histone H3K9 methylation. Contributes to transcriptional gene silencing at RNA-directed DNA methylation (RdDM) target loci but also at RdDM-independent target loci. Forms a complex with SUVR1 and associates with the SNF2-related chromatin-remodeling proteins CHR19, CHR27, and CHR28, thereby mediating nucleosome positioning and transcriptional silencing. Does not possess histone-lysine methyltransferase activity in vitro, and the conserved catalytic sites of SUVR2 are dispensable for its function in transcriptional gene silencing. The chain is Probable inactive histone-lysine N-methyltransferase SUVR2 (SUVR2) from Arabidopsis thaliana (Mouse-ear cress).